The following is a 211-amino-acid chain: Glycerol-3-phosphate acyltransferase (211 aa).

5 consecutive transmembrane segments (helical) span residues 5 to 25 (ALGM…ILFC), 58 to 78 (VLVF…ALGV), 80 to 100 (PLYL…PVFF), 112 to 132 (LGAI…TWLL), and 138 to 158 (GYSS…VWWF).

The protein belongs to the PlsY family. In terms of assembly, probably interacts with PlsX.

It localises to the cell inner membrane. It catalyses the reaction an acyl phosphate + sn-glycerol 3-phosphate = a 1-acyl-sn-glycero-3-phosphate + phosphate. It functions in the pathway lipid metabolism; phospholipid metabolism. Catalyzes the transfer of an acyl group from acyl-phosphate (acyl-PO(4)) to glycerol-3-phosphate (G3P) to form lysophosphatidic acid (LPA). This enzyme utilizes acyl-phosphate as fatty acyl donor, but not acyl-CoA or acyl-ACP. This chain is Glycerol-3-phosphate acyltransferase, found in Pectobacterium atrosepticum (strain SCRI 1043 / ATCC BAA-672) (Erwinia carotovora subsp. atroseptica).